Reading from the N-terminus, the 375-residue chain is AT-rich binding protein (375 aa).

A C2H2-type 1 zinc finger spans residues 29–52; sequence IVCHTCQEELQTQDQFWKHIQDEH. The segment covering 110–119 has biased composition (basic and acidic residues); sequence DDQREMDIHE. The interval 110 to 142 is disordered; it reads DDQREMDIHEAQQQQHQQQQQHQQQQQLQQQQQ. Over residues 121–142 the composition is skewed to low complexity; it reads QQQQHQQQQQHQQQQQLQQQQQ. 2 consecutive C2H2-type zinc fingers follow at residues 308–332 and 338–361; these read YICD…RVVH and FNCE…KKKH.

The protein localises to the nucleus. Functionally, may be a transcription factor for genes having (A+T) stretches in their promoter and/or enhancer regions. Binds to AT rich DNA. In Drosophila pseudoobscura pseudoobscura (Fruit fly), this protein is AT-rich binding protein.